A 317-amino-acid chain; its full sequence is Acetyl-coenzyme A carboxylase carboxyl transferase subunit alpha (317 aa).

Residues 39–293 (RLETKAREAL…GDAIADALSQ (255 aa)) form the CoA carboxyltransferase C-terminal domain.

Belongs to the AccA family. As to quaternary structure, acetyl-CoA carboxylase is a heterohexamer composed of biotin carboxyl carrier protein (AccB), biotin carboxylase (AccC) and two subunits each of ACCase subunit alpha (AccA) and ACCase subunit beta (AccD).

It is found in the cytoplasm. It carries out the reaction N(6)-carboxybiotinyl-L-lysyl-[protein] + acetyl-CoA = N(6)-biotinyl-L-lysyl-[protein] + malonyl-CoA. The protein operates within lipid metabolism; malonyl-CoA biosynthesis; malonyl-CoA from acetyl-CoA: step 1/1. In terms of biological role, component of the acetyl coenzyme A carboxylase (ACC) complex. First, biotin carboxylase catalyzes the carboxylation of biotin on its carrier protein (BCCP) and then the CO(2) group is transferred by the carboxyltransferase to acetyl-CoA to form malonyl-CoA. This is Acetyl-coenzyme A carboxylase carboxyl transferase subunit alpha from Xanthobacter autotrophicus (strain ATCC BAA-1158 / Py2).